We begin with the raw amino-acid sequence, 189 residues long: Inner membrane-spanning protein YciB (189 aa).

Helical transmembrane passes span 23–43, 54–74, 82–102, 120–140, and 150–170; these read ILLATLVLIPATLAQVAFVWW, ITLALVVVMGGATVIFHDAAF, VNWLFAFAFLVAPLFGGKTLI, LNLAWVAFFIALGAINVYVFK, and FKLFGMLGLTLLFVLGQGVYL.

This sequence belongs to the YciB family.

The protein localises to the cell inner membrane. Functionally, plays a role in cell envelope biogenesis, maintenance of cell envelope integrity and membrane homeostasis. This Chromohalobacter salexigens (strain ATCC BAA-138 / DSM 3043 / CIP 106854 / NCIMB 13768 / 1H11) protein is Inner membrane-spanning protein YciB.